Here is a 337-residue protein sequence, read N- to C-terminus: GTP 3',8-cyclase (337 aa).

Residues 18-242 (NFGRRFHYLR…DKADILDGPA (225 aa)) enclose the Radical SAM core domain. Residue R27 coordinates GTP. Residues C34 and C38 each coordinate [4Fe-4S] cluster. Y40 contacts S-adenosyl-L-methionine. C41 lines the [4Fe-4S] cluster pocket. R76 provides a ligand contact to GTP. G80 lines the S-adenosyl-L-methionine pocket. T107 contributes to the GTP binding site. S131 provides a ligand contact to S-adenosyl-L-methionine. A GTP-binding site is contributed by K168. M202 serves as a coordination point for S-adenosyl-L-methionine. C265 and C268 together coordinate [4Fe-4S] cluster. 270–272 (RLR) serves as a coordination point for GTP. C282 is a binding site for [4Fe-4S] cluster.

This sequence belongs to the radical SAM superfamily. MoaA family. As to quaternary structure, monomer and homodimer. [4Fe-4S] cluster is required as a cofactor.

It catalyses the reaction GTP + AH2 + S-adenosyl-L-methionine = (8S)-3',8-cyclo-7,8-dihydroguanosine 5'-triphosphate + 5'-deoxyadenosine + L-methionine + A + H(+). It participates in cofactor biosynthesis; molybdopterin biosynthesis. In terms of biological role, catalyzes the cyclization of GTP to (8S)-3',8-cyclo-7,8-dihydroguanosine 5'-triphosphate. The polypeptide is GTP 3',8-cyclase (Shewanella denitrificans (strain OS217 / ATCC BAA-1090 / DSM 15013)).